The chain runs to 49 residues: Large ribosomal subunit protein bL33B (49 aa).

It belongs to the bacterial ribosomal protein bL33 family.

This Lactobacillus gasseri (strain ATCC 33323 / DSM 20243 / BCRC 14619 / CIP 102991 / JCM 1131 / KCTC 3163 / NCIMB 11718 / NCTC 13722 / AM63) protein is Large ribosomal subunit protein bL33B.